Reading from the N-terminus, the 236-residue chain is Ureidoacrylate amidohydrolase RutB (236 aa).

Asp-24 acts as the Proton acceptor in catalysis. Lys-133 is an active-site residue. The Nucleophile role is filled by Cys-166.

The protein belongs to the isochorismatase family. RutB subfamily.

The catalysed reaction is (Z)-3-ureidoacrylate + H2O + H(+) = (Z)-3-aminoacrylate + NH4(+) + CO2. The enzyme catalyses (Z)-3-ureidoacrylate + H2O = (Z)-3-aminoacrylate + carbamate + H(+). It carries out the reaction (Z)-2-methylureidoacrylate + H2O + H(+) = (Z)-2-methylaminoacrylate + NH4(+) + CO2. In terms of biological role, hydrolyzes ureidoacrylate to form aminoacrylate and carbamate. The carbamate hydrolyzes spontaneously, thereby releasing one of the nitrogen atoms of the pyrimidine ring as ammonia and one of its carbon atoms as CO2. The protein is Ureidoacrylate amidohydrolase RutB of Klebsiella variicola (strain At-22).